A 611-amino-acid chain; its full sequence is Protein decapping 5 (611 aa).

Residues 9-92 (KSSSAADSYV…IKDLQVKASP (84 aa)) enclose the Sm domain. Disordered regions lie at residues 111 to 153 (HYPS…AMPL), 183 to 238 (GLPQ…PSSL), 264 to 301 (SSSL…PTLP), 318 to 362 (EAST…DKPK), 396 to 455 (QVSS…AGRS), and 519 to 611 (FFDS…NRTT). Polar residues-rich tracts occupy residues 117–140 (PTSG…NGQP) and 203–214 (NSLQQPLQYPNF). Over residues 264-281 (SSSLQSTLQSAPSPSLAS) the composition is skewed to low complexity. Polar residues-rich tracts occupy residues 318–330 (EAST…NKPS), 396–413 (QVSS…TSEA), and 424–437 (ARPT…SFPN). The segment covering 441–453 (YRGRGRGRGRGAG) has biased composition (basic residues). Positions 453-489 (GRSHQVMKFTEDFDFTAMNEKFNKDEVWGHLGKSTTL) constitute a DFDF domain. Positions 512–527 (PVYNKDDFFDSLSSNT) match the FFD box motif. A compositionally biased stretch (basic and acidic residues) spans 528–547 (IDRESQNSRPRFSEQRKLDT). Residues 534 to 554 (NSRPRFSEQRKLDTETFGEFS) carry the TFG box motif. Residues 559–604 (GRGGRGGYGRNNGYSRGGYGGRGYGGYGGRGGGGGGYGYGGRGQGR) are compositionally biased toward gly residues.

Belongs to the LSM14 family. Homodimer. Component of the decapping complex. Interacts with DCP1 and DCP2.

It localises to the cytoplasm. The protein localises to the P-body. Its function is as follows. As a component of the decapping complex, involved in the degradation of mRNAs. Promotes P-body formation. Translational repressor. The sequence is that of Protein decapping 5 (DCP5) from Arabidopsis thaliana (Mouse-ear cress).